The sequence spans 800 residues: Mitochondrial intermediate peptidase (800 aa).

The N-terminal 23 residues, M1 to L23, are a transit peptide targeting the mitochondrion. Residues R27 to D41 show a composition bias toward polar residues. The tract at residues R27 to E59 is disordered. H563 lines the Zn(2+) pocket. The active site involves E564. Zn(2+)-binding residues include H567 and H570.

Belongs to the peptidase M3 family. Zn(2+) serves as cofactor.

Its subcellular location is the mitochondrion matrix. It carries out the reaction Release of an N-terminal octapeptide as second stage of processing of some proteins imported into the mitochondrion.. Cleaves proteins, imported into the mitochondrion, to their mature size. While most mitochondrial precursor proteins are processed to the mature form in one step by mitochondrial processing peptidase (MPP), the sequential cleavage by MIP of an octapeptide after initial processing by MPP is a required step for a subgroup of nuclear-encoded precursor proteins destined for the matrix or the inner membrane. The chain is Mitochondrial intermediate peptidase (oct1) from Aspergillus oryzae (strain ATCC 42149 / RIB 40) (Yellow koji mold).